A 596-amino-acid chain; its full sequence is DNA primase (596 aa).

A CHC2-type zinc finger spans residues 41 to 65 (CPFHHEKTPSFSVSQDKQIYKCFGC). Residues 255 to 336 (DTIIIVEGYM…DIKIIKIPDG (82 aa)) enclose the Toprim domain. Positions 261, 305, and 307 each coordinate Mg(2+).

It belongs to the DnaG primase family. Monomer. Interacts with DnaB. Requires Zn(2+) as cofactor. The cofactor is Mg(2+).

It catalyses the reaction ssDNA + n NTP = ssDNA/pppN(pN)n-1 hybrid + (n-1) diphosphate.. In terms of biological role, RNA polymerase that catalyzes the synthesis of short RNA molecules used as primers for DNA polymerase during DNA replication. This is DNA primase from Clostridium acetobutylicum (strain ATCC 824 / DSM 792 / JCM 1419 / IAM 19013 / LMG 5710 / NBRC 13948 / NRRL B-527 / VKM B-1787 / 2291 / W).